The primary structure comprises 1216 residues: RAB11-binding protein RELCH (1216 aa).

Disordered regions lie at residues 1-73 (MAAM…GLPG) and 135-177 (GNFE…QLNR). N-acetylalanine is present on Ala-2. Phosphoserine is present on residues Ser-20 and Ser-22. Over residues 21–31 (DSDEDDDEVAA) the composition is skewed to acidic residues. At Thr-32 the chain carries Phosphothreonine. 2 positions are modified to phosphoserine: Ser-54 and Ser-56. Positions 148–163 (GAPGVPGAAGVGGAGG) are enriched in gly residues. Phosphoserine occurs at positions 180 and 182. Position 183 is a phosphothreonine (Thr-183). Phosphoserine is present on Ser-186. A coiled-coil region spans residues 197 to 231 (NRETDEKVAVLEFELRKAKETIQALRANLTKAAEH). In terms of domain architecture, LisH spans 255 to 287 (EKRALNFLVNEFLLKNNYKLTSITFSDENDDQD). Residues 359-397 (VQKLEDKISLLNSEKWSLMEQIRRLKSEMDFLKNEHFAI) are a coiled coil. Ser-385 carries the post-translational modification Phosphoserine. Residues 401–477 (CDSVQPPLDQ…SSLSSKKTVH (77 aa)) are disordered. The span at 411-435 (LPHKDSEDSGQHPDVNSSDKGKNTD) shows a compositional bias: basic and acidic residues. Ser-453 is modified (phosphoserine). An interaction with RAB11A and RAB11B region spans residues 497–779 (CRMSADSRLG…SSKAKLHGEV (283 aa)). 2 HEAT repeats span residues 601–639 (LLPQ…RSSL) and 640–679 (VLSM…KYHQ). Ser-792 is subject to Phosphoserine. Residues 1004-1042 (VAPALVTLSSDPEFSVRIATIPAFGTIMETVIQRELLER) form an HEAT 3 repeat. At Ser-1149 the chain carries Phosphoserine.

The protein localises to the recycling endosome. The protein resides in the golgi apparatus. It localises to the trans-Golgi network. Regulates intracellular cholesterol distribution from recycling endosomes to the trans-Golgi network through interactions with RAB11 and OSBP. Functions in membrane tethering and promotes OSBP-mediated cholesterol transfer between RAB11-bound recycling endosomes and OSBP-bound Golgi-like membranes. In Homo sapiens (Human), this protein is RAB11-binding protein RELCH.